The chain runs to 731 residues: Elongation factor 2 (731 aa).

In terms of domain architecture, tr-type G spans Glu-19–Lys-234. GTP is bound by residues Ala-28–Thr-35, Asp-94–His-98, and Asn-148–Asp-151. His-598 carries the diphthamide modification.

It belongs to the TRAFAC class translation factor GTPase superfamily. Classic translation factor GTPase family. EF-G/EF-2 subfamily.

Its subcellular location is the cytoplasm. Its function is as follows. Catalyzes the GTP-dependent ribosomal translocation step during translation elongation. During this step, the ribosome changes from the pre-translocational (PRE) to the post-translocational (POST) state as the newly formed A-site-bound peptidyl-tRNA and P-site-bound deacylated tRNA move to the P and E sites, respectively. Catalyzes the coordinated movement of the two tRNA molecules, the mRNA and conformational changes in the ribosome. The protein is Elongation factor 2 of Methanobrevibacter ruminantium (strain ATCC 35063 / DSM 1093 / JCM 13430 / OCM 146 / M1) (Methanobacterium ruminantium).